Reading from the N-terminus, the 132-residue chain is Small ribosomal subunit protein uS8c (132 aa).

It belongs to the universal ribosomal protein uS8 family. As to quaternary structure, part of the 30S ribosomal subunit.

Its subcellular location is the plastid. It is found in the chloroplast. In terms of biological role, one of the primary rRNA binding proteins, it binds directly to 16S rRNA central domain where it helps coordinate assembly of the platform of the 30S subunit. The protein is Small ribosomal subunit protein uS8c (rps8) of Huperzia lucidula (Shining clubmoss).